Consider the following 302-residue polypeptide: GTP cyclohydrolase FolE2 (302 aa).

The disordered stretch occupies residues 1-27 (MPKKQLPPKEERHKLFGSVPPKERTKP).

It belongs to the GTP cyclohydrolase IV family.

The enzyme catalyses GTP + H2O = 7,8-dihydroneopterin 3'-triphosphate + formate + H(+). Its pathway is cofactor biosynthesis; 7,8-dihydroneopterin triphosphate biosynthesis; 7,8-dihydroneopterin triphosphate from GTP: step 1/1. Functionally, converts GTP to 7,8-dihydroneopterin triphosphate. The protein is GTP cyclohydrolase FolE2 of Oceanobacillus iheyensis (strain DSM 14371 / CIP 107618 / JCM 11309 / KCTC 3954 / HTE831).